The sequence spans 365 residues: Spore germination protein A2 (365 aa).

A run of 11 helical transmembrane segments spans residues 12-32 (TFQGISIVANTMLGAGLLTLP), 45-65 (WITLILEGFIFIFFIYLNTLI), 85-105 (WIGSIIGLLICGYFLGVASFE), 122-142 (PIQVIILTFICCGIYLMVGGL), 148-168 (LFPFYLTVTIIILLIVFGISF), 187-207 (IANSLTVVSISFLGMEVMLFL), 223-243 (LGFLIPIILYILTYIIVVGAL), 250-270 (TLIWPTISLFQSFELKGIFIE), 275-295 (FLLVVWIIQFFTTFVIYGYFA), 303-323 (FGLSTKTSMVIIGITVFYFSL), and 338-358 (LGYIFVSLFLLPFILFFIVAL).

Belongs to the amino acid-polyamine-organocation (APC) superfamily. Spore germination protein (SGP) (TC 2.A.3.9) family.

The protein localises to the cell membrane. Functionally, involved in the germinative response to L-alanine. Could be an amino acid transporter. Forms a complex at the inner spore membrane which acts as a receptor for L-alanine, thus is involved in the stimulation of germination in response to alanine. Can stimulate germination in the absence of gerD and gerK gene products (fructose and glucose receptors, respectively), but the response is improved in their presence. The protein is Spore germination protein A2 (gerAB) of Bacillus subtilis (strain 168).